The chain runs to 368 residues: Cystathionine beta-lyase (368 aa).

The residue at position 221 (lysine 221) is an N6-(pyridoxal phosphate)lysine.

This sequence belongs to the class-II pyridoxal-phosphate-dependent aminotransferase family. MalY/PatB cystathionine beta-lyase subfamily. It depends on pyridoxal 5'-phosphate as a cofactor.

The catalysed reaction is L,L-cystathionine + H2O = L-homocysteine + pyruvate + NH4(+). It catalyses the reaction an S-substituted L-cysteine + H2O = a thiol + pyruvate + NH4(+). It participates in amino-acid biosynthesis; L-methionine biosynthesis via de novo pathway; L-homocysteine from L-cystathionine: step 1/1. Functionally, catalyzes the transformation of cystathionine to homocysteine. The protein is Cystathionine beta-lyase (metC) of Corynebacterium glutamicum (Brevibacterium saccharolyticum).